The sequence spans 134 residues: MRGREVPLVLLALVLCLAPRGWAAPVTAGRGGALAKMYTRGNHWAVGHLMGKKSVAESPQLHEEESLKEQLREYAQWEEATRNLLSLLQAKGARGHQMPPWEPLSIHQPAWDSEDVSNFKDTGPQHEGRNPQLN.

The first 23 residues, 1–23, serve as a signal peptide directing secretion; that stretch reads MRGREVPLVLLALVLCLAPRGWA. Residue M50 is modified to Methionine amide. Residues 54–134 constitute a propeptide that is removed on maturation; that stretch reads SVAESPQLHE…QHEGRNPQLN (81 aa). The interval 95-134 is disordered; that stretch reads GHQMPPWEPLSIHQPAWDSEDVSNFKDTGPQHEGRNPQLN. The segment covering 123 to 134 has biased composition (basic and acidic residues); the sequence is GPQHEGRNPQLN.

It belongs to the bombesin/neuromedin-B/ranatensin family. Detected in adrenal medulla (at protein level).

The protein resides in the cytoplasmic vesicle. It is found in the secretory vesicle lumen. It localises to the secreted. Its subcellular location is the cell projection. The protein localises to the neuron projection. Functionally, stimulates the release of gastrin and other gastrointestinal hormones. Contributes to the perception of prurient stimuli and to the transmission of itch signals in the spinal cord that promote scratching behavior. Contributes primarily to nonhistaminergic itch sensation. In one study, shown to act in the amygdala as part of an inhibitory network which inhibits memory specifically related to learned fear. In another study, shown to act on vasoactive intestinal peptide (VIP)-expressing cells in the auditory cortex, most likely via extrasynaptic diffusion from local and long-range sources, to mediate disinhibition of glutamatergic cells via VIP cell-specific GRPR signaling which leads to enhanced auditory fear memories. Contributes to the regulation of food intake. Inhibits voltage-gated sodium channels but enhances voltage-gated potassium channels in hippocampal neurons. Induces sighing by acting directly on the pre-Botzinger complex, a cluster of several thousand neurons in the ventrolateral medulla responsible for inspiration during respiratory activity. Induces an itch response through activation of receptors present on mast cells, triggering mast cell degranulation. The sequence is that of Gastrin-releasing peptide (GRP) from Bos taurus (Bovine).